Reading from the N-terminus, the 73-residue chain is Translation initiation factor IF-1 (73 aa).

Positions 1-73 constitute an S1-like domain; it reads MAKKDGVIEI…NRGRIVYRYR (73 aa).

This sequence belongs to the IF-1 family. In terms of assembly, component of the 30S ribosomal translation pre-initiation complex which assembles on the 30S ribosome in the order IF-2 and IF-3, IF-1 and N-formylmethionyl-tRNA(fMet); mRNA recruitment can occur at any time during PIC assembly.

It localises to the cytoplasm. One of the essential components for the initiation of protein synthesis. Stabilizes the binding of IF-2 and IF-3 on the 30S subunit to which N-formylmethionyl-tRNA(fMet) subsequently binds. Helps modulate mRNA selection, yielding the 30S pre-initiation complex (PIC). Upon addition of the 50S ribosomal subunit IF-1, IF-2 and IF-3 are released leaving the mature 70S translation initiation complex. This chain is Translation initiation factor IF-1, found in Acidothermus cellulolyticus (strain ATCC 43068 / DSM 8971 / 11B).